A 723-amino-acid chain; its full sequence is Polyribonucleotide nucleotidyltransferase (723 aa).

Positions 488 and 494 each coordinate Mg(2+). One can recognise a KH domain in the interval 555-614 (PRMITMKIHPDKIREVIGKGGSTIQALTKETGTTIDIQEDGTITIASTSTEGMAEAKRRI). The 69-residue stretch at 624 to 692 (GKIYAGTVLK…EKGRLRLSLK (69 aa)) folds into the S1 motif domain. The interval 701 to 723 (SISPINAGESAAPAAPAGGSEQQ) is disordered. The segment covering 707 to 723 (AGESAAPAAPAGGSEQQ) has biased composition (low complexity).

Belongs to the polyribonucleotide nucleotidyltransferase family. Mg(2+) serves as cofactor.

The protein resides in the cytoplasm. The enzyme catalyses RNA(n+1) + phosphate = RNA(n) + a ribonucleoside 5'-diphosphate. Its function is as follows. Involved in mRNA degradation. Catalyzes the phosphorolysis of single-stranded polyribonucleotides processively in the 3'- to 5'-direction. The polypeptide is Polyribonucleotide nucleotidyltransferase (Cupriavidus taiwanensis (strain DSM 17343 / BCRC 17206 / CCUG 44338 / CIP 107171 / LMG 19424 / R1) (Ralstonia taiwanensis (strain LMG 19424))).